The primary structure comprises 352 residues: Phosphate acyltransferase (352 aa).

Residues 328–339 are compositionally biased toward basic and acidic residues; it reads ESFPGDAREREG. Positions 328–352 are disordered; the sequence is ESFPGDAREREGAQAPDAGTERVAS.

The protein belongs to the PlsX family. Homodimer. Probably interacts with PlsY.

The protein localises to the cytoplasm. The catalysed reaction is a fatty acyl-[ACP] + phosphate = an acyl phosphate + holo-[ACP]. It functions in the pathway lipid metabolism; phospholipid metabolism. In terms of biological role, catalyzes the reversible formation of acyl-phosphate (acyl-PO(4)) from acyl-[acyl-carrier-protein] (acyl-ACP). This enzyme utilizes acyl-ACP as fatty acyl donor, but not acyl-CoA. This chain is Phosphate acyltransferase, found in Geobacter sp. (strain M21).